We begin with the raw amino-acid sequence, 136 residues long: Small ribosomal subunit protein uS8c (136 aa).

The protein belongs to the universal ribosomal protein uS8 family. Part of the 30S ribosomal subunit.

It is found in the plastid. It localises to the chloroplast. Functionally, one of the primary rRNA binding proteins, it binds directly to 16S rRNA central domain where it helps coordinate assembly of the platform of the 30S subunit. The chain is Small ribosomal subunit protein uS8c (rps8) from Tetradesmus obliquus (Green alga).